A 166-amino-acid polypeptide reads, in one-letter code: Telethonin (166 aa).

Serine 39 carries the post-translational modification Phosphoserine. Residues 145–166 form a disordered region; it reads VSKPGTLRRSLSRSMSQEAQRG. The segment covering 156–166 has biased composition (polar residues); sequence SRSMSQEAQRG.

In terms of assembly, interacts with MYOZ1, MYOZ2 and MYOZ3. Interacts with CSRP3. Interacts directly with the N-terminal Ig-like domains of 2 titin (TTN) molecules. Interacts with ANKRD2; the interaction is direct.

It localises to the cytoplasm. Its subcellular location is the myofibril. It is found in the sarcomere. Its function is as follows. Muscle assembly regulating factor. Mediates the antiparallel assembly of titin (TTN) molecules at the sarcomeric Z-disk. The sequence is that of Telethonin (TCAP) from Bos taurus (Bovine).